The following is a 527-amino-acid chain: Peptide chain release factor 3 (527 aa).

The tr-type G domain maps to 9–277; it reads AKRRTFAIIS…AVVNWAPKPL (269 aa). Residues 18 to 25, 86 to 90, and 140 to 143 each bind GTP; these read SHPDAGKT, DTPGH, and NKLD.

Belongs to the TRAFAC class translation factor GTPase superfamily. Classic translation factor GTPase family. PrfC subfamily.

It localises to the cytoplasm. Its function is as follows. Increases the formation of ribosomal termination complexes and stimulates activities of RF-1 and RF-2. It binds guanine nucleotides and has strong preference for UGA stop codons. It may interact directly with the ribosome. The stimulation of RF-1 and RF-2 is significantly reduced by GTP and GDP, but not by GMP. The sequence is that of Peptide chain release factor 3 from Pseudomonas syringae pv. syringae (strain B728a).